We begin with the raw amino-acid sequence, 215 residues long: MGCYSMGFVGRKAGMSRVFLEDGRSIPVTLIEATANRVVQIKTSDVDGYDAIQVTVGSRRSVLVNKPESGHFAKAKVEAGRGLWEFRVEKTQLGSYSVGSEVGLSIFAVGQKVDIQGITKGKGFQGTIKRHNFRMGDATHGNSLSHRAPGSLGQRQTPGRVFPGKKMSGHMGAVRQSVQNLEVIKIDVERFLIAVRGAIPGASGGDVLIRSASKI.

An N5-methylglutamine modification is found at Q156.

The protein belongs to the universal ribosomal protein uL3 family. As to quaternary structure, part of the 50S ribosomal subunit. Forms a cluster with proteins L14 and L19. Methylated by PrmB.

Its function is as follows. One of the primary rRNA binding proteins, it binds directly near the 3'-end of the 23S rRNA, where it nucleates assembly of the 50S subunit. This is Large ribosomal subunit protein uL3 from Xylella fastidiosa (strain M12).